Here is a 402-residue protein sequence, read N- to C-terminus: CCA-adding enzyme (402 aa).

2 residues coordinate ATP: glycine 32 and arginine 35. CTP contacts are provided by glycine 32 and arginine 35. Mg(2+)-binding residues include aspartate 45 and aspartate 47. Residues arginine 116, aspartate 159, arginine 162, arginine 165, and arginine 168 each coordinate ATP. Arginine 116, aspartate 159, arginine 162, arginine 165, and arginine 168 together coordinate CTP.

Belongs to the tRNA nucleotidyltransferase/poly(A) polymerase family. Bacterial CCA-adding enzyme type 3 subfamily. Homodimer. Requires Mg(2+) as cofactor.

The enzyme catalyses a tRNA precursor + 2 CTP + ATP = a tRNA with a 3' CCA end + 3 diphosphate. It catalyses the reaction a tRNA with a 3' CCA end + 2 CTP + ATP = a tRNA with a 3' CCACCA end + 3 diphosphate. In terms of biological role, catalyzes the addition and repair of the essential 3'-terminal CCA sequence in tRNAs without using a nucleic acid template. Adds these three nucleotides in the order of C, C, and A to the tRNA nucleotide-73, using CTP and ATP as substrates and producing inorganic pyrophosphate. tRNA 3'-terminal CCA addition is required both for tRNA processing and repair. Also involved in tRNA surveillance by mediating tandem CCA addition to generate a CCACCA at the 3' terminus of unstable tRNAs. While stable tRNAs receive only 3'-terminal CCA, unstable tRNAs are marked with CCACCA and rapidly degraded. The protein is CCA-adding enzyme of Streptococcus agalactiae serotype III (strain NEM316).